A 148-amino-acid chain; its full sequence is Single-stranded DNA-binding protein, mitochondrial (148 aa).

Residues 1 to 16 (MFRRPVVQVLRQFVRH) constitute a mitochondrion transit peptide. Residues 30–141 (LNRVQLLGRV…IIADNIIFLS (112 aa)) enclose the SSB domain. Phosphoserine occurs at positions 67 and 79. Lys113 is modified (N6-acetyllysine). Residue Lys122 is modified to N6-succinyllysine.

As to quaternary structure, homotetramer. Interacts with MPG/AAG, through inhibition of its glycosylase activity it potentially prevents formation of DNA breaks in ssDNA, ensuring that base removal primarily occurs in dsDNA. Interacts with POLDIP2. Interacts with PRIMPOL.

Its subcellular location is the mitochondrion. It is found in the mitochondrion matrix. The protein localises to the mitochondrion nucleoid. Functionally, binds preferentially and cooperatively to pyrimidine rich single-stranded DNA (ss-DNA). In vitro, required to maintain the copy number of mitochondrial DNA (mtDNA) and plays a crucial role during mtDNA replication by stimulating the activity of the replisome components POLG and TWNK at the replication fork. Promotes the activity of the gamma complex polymerase POLG, largely by organizing the template DNA and eliminating secondary structures to favor ss-DNA conformations that facilitate POLG activity. In addition it is able to promote the 5'-3' unwinding activity of the mtDNA helicase TWNK. May also function in mtDNA repair. The sequence is that of Single-stranded DNA-binding protein, mitochondrial (SSBP1) from Bos taurus (Bovine).